The sequence spans 276 residues: 6-chlorohydroxyquinol 1,2-dioxygenase (276 aa).

Fe cation-binding residues include Tyr-157, Tyr-191, His-215, and His-217.

It belongs to the intradiol ring-cleavage dioxygenase family. The cofactor is Fe(3+).

Its pathway is aromatic compound metabolism. The protein operates within xenobiotic degradation. Functionally, involved in the degradation of 2,4,6-trichlorophenol (2,4,6-TCP). May catalyze the oxidation of 6-chlorohydroxyquinol (6-CHQ) to 2-chloromaleylacetate (2-CMA). The polypeptide is 6-chlorohydroxyquinol 1,2-dioxygenase (Cupriavidus pinatubonensis (strain JMP 134 / LMG 1197) (Cupriavidus necator (strain JMP 134))).